The sequence spans 201 residues: Protein OPI10 homolog (201 aa).

The protein belongs to the OPI10 family.

This is Protein OPI10 homolog from Anopheles gambiae (African malaria mosquito).